The primary structure comprises 428 residues: Histidinol dehydrogenase (428 aa).

NAD(+) is bound by residues Tyr-127, Gln-185, and Asn-208. Substrate is bound by residues Ser-232, Gln-254, and His-257. Zn(2+)-binding residues include Gln-254 and His-257. Residues Glu-321 and His-322 each act as proton acceptor in the active site. Substrate contacts are provided by His-322, Asp-355, Glu-409, and His-414. Asp-355 lines the Zn(2+) pocket. His-414 is a Zn(2+) binding site.

This sequence belongs to the histidinol dehydrogenase family. It depends on Zn(2+) as a cofactor.

It carries out the reaction L-histidinol + 2 NAD(+) + H2O = L-histidine + 2 NADH + 3 H(+). Its pathway is amino-acid biosynthesis; L-histidine biosynthesis; L-histidine from 5-phospho-alpha-D-ribose 1-diphosphate: step 9/9. Catalyzes the sequential NAD-dependent oxidations of L-histidinol to L-histidinaldehyde and then to L-histidine. The chain is Histidinol dehydrogenase from Pasteurella multocida (strain Pm70).